We begin with the raw amino-acid sequence, 118 residues long: Large ribosomal subunit protein bL20 (118 aa).

This sequence belongs to the bacterial ribosomal protein bL20 family.

Binds directly to 23S ribosomal RNA and is necessary for the in vitro assembly process of the 50S ribosomal subunit. It is not involved in the protein synthesizing functions of that subunit. This Desulforamulus reducens (strain ATCC BAA-1160 / DSM 100696 / MI-1) (Desulfotomaculum reducens) protein is Large ribosomal subunit protein bL20.